A 40-amino-acid chain; its full sequence is U4-ctenitoxin-Co1c (40 aa).

4 disulfides stabilise this stretch: cysteine 3–cysteine 20, cysteine 10–cysteine 26, cysteine 19–cysteine 40, and cysteine 28–cysteine 38.

Expressed by the venom gland.

It is found in the secreted. In terms of biological role, not toxic to mice by intracerebroventricular injection. In Ctenus ornatus (Brazilian spider), this protein is U4-ctenitoxin-Co1c.